The primary structure comprises 27 residues: Delta-conotoxin SuVIA (27 aa).

3 cysteine pairs are disulfide-bonded: Cys1/Cys17, Cys8/Cys21, and Cys16/Cys25.

Belongs to the conotoxin O1 superfamily. As to expression, expressed by the venom duct, in the proximal part (indicative of a defensive role).

The protein localises to the secreted. This toxin activates voltage-gated sodium channels (Nav1.3/SCN3A (EC(50)=3.98 nM), Nav1.4/SCN4A (EC(50)=4.99 nM), Nav1.6/SCN8A (EC(50)=1.27 nM) and Nav1.7/SCN9A (EC(50)=2.42 nM)). It shifts the voltage-dependence of activation to more hyperpolarized potentials but has only little effect on channel inactivation. In vivo, it induces nocifensive or pain-like behaviors in mice when injected intraplantarly. This is coherent with the specific defensive role deduced from its proximal position in the venom gland. This chain is Delta-conotoxin SuVIA, found in Conus suturatus (Sutured cone).